Reading from the N-terminus, the 338-residue chain is Phenylalanine--tRNA ligase alpha subunit (338 aa).

Glutamate 253 contacts Mg(2+).

This sequence belongs to the class-II aminoacyl-tRNA synthetase family. Phe-tRNA synthetase alpha subunit type 1 subfamily. As to quaternary structure, tetramer of two alpha and two beta subunits. Mg(2+) serves as cofactor.

Its subcellular location is the cytoplasm. It carries out the reaction tRNA(Phe) + L-phenylalanine + ATP = L-phenylalanyl-tRNA(Phe) + AMP + diphosphate + H(+). The chain is Phenylalanine--tRNA ligase alpha subunit from Geobacter sp. (strain M21).